The sequence spans 388 residues: Succinate--CoA ligase [ADP-forming] subunit beta (388 aa).

An ATP-grasp domain is found at 9–244; sequence KQLFARYGLP…PSQEDPREAQ (236 aa). ATP-binding positions include K46, 53–55, E99, T102, and E107; that span reads GRG. Residues N199 and D213 each coordinate Mg(2+). Substrate is bound by residues N264 and 321–323; that span reads GIV.

It belongs to the succinate/malate CoA ligase beta subunit family. In terms of assembly, heterotetramer of two alpha and two beta subunits. Mg(2+) serves as cofactor.

The catalysed reaction is succinate + ATP + CoA = succinyl-CoA + ADP + phosphate. It carries out the reaction GTP + succinate + CoA = succinyl-CoA + GDP + phosphate. It functions in the pathway carbohydrate metabolism; tricarboxylic acid cycle; succinate from succinyl-CoA (ligase route): step 1/1. Functionally, succinyl-CoA synthetase functions in the citric acid cycle (TCA), coupling the hydrolysis of succinyl-CoA to the synthesis of either ATP or GTP and thus represents the only step of substrate-level phosphorylation in the TCA. The beta subunit provides nucleotide specificity of the enzyme and binds the substrate succinate, while the binding sites for coenzyme A and phosphate are found in the alpha subunit. The sequence is that of Succinate--CoA ligase [ADP-forming] subunit beta from Photorhabdus laumondii subsp. laumondii (strain DSM 15139 / CIP 105565 / TT01) (Photorhabdus luminescens subsp. laumondii).